An 87-amino-acid chain; its full sequence is uncharacterized protein (87 aa).

This sequence belongs to the SF3B5 family.

This is an uncharacterized protein from Arabidopsis thaliana (Mouse-ear cress).